The following is a 324-amino-acid chain: Beta-ketoacyl-[acyl-carrier-protein] synthase III (324 aa).

Residues Cys-116 and His-251 contribute to the active site. An ACP-binding region spans residues 252 to 256 (QANLR). Residue Asn-281 is part of the active site.

It belongs to the thiolase-like superfamily. FabH family. In terms of assembly, homodimer.

It is found in the cytoplasm. It carries out the reaction malonyl-[ACP] + acetyl-CoA + H(+) = 3-oxobutanoyl-[ACP] + CO2 + CoA. The protein operates within lipid metabolism; fatty acid biosynthesis. Functionally, catalyzes the condensation reaction of fatty acid synthesis by the addition to an acyl acceptor of two carbons from malonyl-ACP. Catalyzes the first condensation reaction which initiates fatty acid synthesis and may therefore play a role in governing the total rate of fatty acid production. Possesses both acetoacetyl-ACP synthase and acetyl transacylase activities. Its substrate specificity determines the biosynthesis of branched-chain and/or straight-chain of fatty acids. This Xylella fastidiosa (strain Temecula1 / ATCC 700964) protein is Beta-ketoacyl-[acyl-carrier-protein] synthase III.